Consider the following 291-residue polypeptide: ATP synthase gamma chain (291 aa).

This sequence belongs to the ATPase gamma chain family. As to quaternary structure, F-type ATPases have 2 components, CF(1) - the catalytic core - and CF(0) - the membrane proton channel. CF(1) has five subunits: alpha(3), beta(3), gamma(1), delta(1), epsilon(1). CF(0) has three main subunits: a, b and c.

It is found in the cell inner membrane. Its function is as follows. Produces ATP from ADP in the presence of a proton gradient across the membrane. The gamma chain is believed to be important in regulating ATPase activity and the flow of protons through the CF(0) complex. The protein is ATP synthase gamma chain of Rhodopseudomonas palustris (strain ATCC BAA-98 / CGA009).